The following is a 65-amino-acid chain: Large ribosomal subunit protein bL35 (65 aa).

The protein belongs to the bacterial ribosomal protein bL35 family.

The protein is Large ribosomal subunit protein bL35 of Phytoplasma australiense.